The sequence spans 258 residues: Tryptophan synthase alpha chain (258 aa).

Residues E47 and D58 each act as proton acceptor in the active site.

The protein belongs to the TrpA family. Tetramer of two alpha and two beta chains.

The enzyme catalyses (1S,2R)-1-C-(indol-3-yl)glycerol 3-phosphate + L-serine = D-glyceraldehyde 3-phosphate + L-tryptophan + H2O. The protein operates within amino-acid biosynthesis; L-tryptophan biosynthesis; L-tryptophan from chorismate: step 5/5. In terms of biological role, the alpha subunit is responsible for the aldol cleavage of indoleglycerol phosphate to indole and glyceraldehyde 3-phosphate. This is Tryptophan synthase alpha chain from Bacillus cereus (strain ATCC 10987 / NRS 248).